The following is a 505-amino-acid chain: Putative ribose/galactose/methyl galactoside import ATP-binding protein 1 (505 aa).

2 consecutive ABC transporter domains span residues 10–245 and 256–501; these read LRLE…VGRS and RPTD…SGYG. 42-49 provides a ligand contact to ATP; sequence GENGAGKS.

It belongs to the ABC transporter superfamily. Carbohydrate importer 2 (CUT2) (TC 3.A.1.2) family.

The protein resides in the cell inner membrane. The catalysed reaction is D-ribose(out) + ATP + H2O = D-ribose(in) + ADP + phosphate + H(+). The enzyme catalyses D-galactose(out) + ATP + H2O = D-galactose(in) + ADP + phosphate + H(+). In terms of biological role, part of an ABC transporter complex involved in carbohydrate import. Could be involved in ribose, galactose and/or methyl galactoside import. Responsible for energy coupling to the transport system. This chain is Putative ribose/galactose/methyl galactoside import ATP-binding protein 1, found in Agrobacterium fabrum (strain C58 / ATCC 33970) (Agrobacterium tumefaciens (strain C58)).